The chain runs to 41 residues: Pi-stichotoxin-Hcr5b (41 aa).

Cystine bridges form between cysteine 4–cysteine 37, cysteine 6–cysteine 30, and cysteine 20–cysteine 38.

The protein belongs to the sea anemone type 3 (BDS) potassium channel toxin family.

It is found in the secreted. Its subcellular location is the nematocyst. Its function is as follows. Remarkably non-selective toxin, with activity on many different ion channels. Weakly and reversibly inhibits rat and human homomeric ASIC1 (isoform ASIC1a) (IC(50)=4.8 uM, and IC(50)=14.6 uM), and ASIC3 (IC(50)=15.9 uM). Molecular modeling interaction with ASIC1a suggests that this peptide hinders the collapse of acidic pockets and stabilizes nonconducting channels state. It activates several potassium channels including Kv1.1/KCNA1, Kv1.2/KCNA2, and drosophila Shaker IR. It moderately to potently inhibits potassium channels including Kv1.3/KCNA3, Kv1.4/KCNA4, Kv1.5/KCNA5, Kv1.6/KCNA6, Kv2.1/KCNB1, Kv4.2/KCND2, Kv7.1/KCNQ1, Kv7.2/Kv7.3 (KCNQ2/KCNQ3), Kv7.4/KCNQ4, hERG/KCNH2, and C.elegans QKT1. On sodium channels, it moderately to potently inhibits Nav1.1/SCN1A, Nav1.2/SCN2A, Nav1.3/SCN3A, Nav1.4/SCN4A, Nav1.5/SCN5A, Nav1.6/SCN8A, Nav1.7/SCN9A, Nav1.8/SCN10A, and B.germanica BgNav. It also moderately to potently inhibits Cav3.1/CACNA1G, Cav3.2/CACNA1H, and Cav3.3/CACNA1I. Significant shifts in the voltage-current relationship are observed on Kv and Nav, depending on the channel isoform, whereas the toxin does not seem to modulate the voltage-sensor domains of Cav channels, acting mainly as a pore blocker. Does not activate nicotinic acetylcholine receptors (nAChR), but potentiates ACh-elicited current of human alpha-7/CHRNA7 nAChR. Is also able to bind T.californica muscle-type nAChRs. In vivo, causes an excitatory effect in mice behavior. Also shows antihyperalgesic and analgesic activity in the acid-induced muscle pain mice model, and weak anti-inflammatory effect in models of acute local inflammation. The sequence is that of Pi-stichotoxin-Hcr5b from Radianthus crispa (Leathery sea anemone).